A 121-amino-acid polypeptide reads, in one-letter code: Large ribosomal subunit protein bL19 (121 aa).

It belongs to the bacterial ribosomal protein bL19 family.

Functionally, this protein is located at the 30S-50S ribosomal subunit interface and may play a role in the structure and function of the aminoacyl-tRNA binding site. The polypeptide is Large ribosomal subunit protein bL19 (Mesomycoplasma hyopneumoniae (strain 7448) (Mycoplasma hyopneumoniae)).